A 1300-amino-acid polypeptide reads, in one-letter code: Sal-like protein 3 (1300 aa).

Positions 1 to 11 (MSRRKQAKPQH) are enriched in basic residues. 4 disordered regions span residues 1–51 (MSRR…EETS), 84–162 (EDAP…YGAP), 234–258 (QRPPPRPSLSPAAAPSAPGPAPSQL), and 277–352 (GSGP…GSLL). Residues 51–73 (SVCEKCCAEFFKWADFLEHQRSC) form a C2H2-type 1; atypical zinc finger. Residues 87–100 (PAPPPEDFPEPSPA) are compositionally biased toward pro residues. Serine 109 carries the post-translational modification Phosphoserine. The span at 122-132 (GEARPVEKEAE) shows a compositional bias: basic and acidic residues. Positions 145–157 (PRPPPAAPAPPTP) are enriched in pro residues. 2 stretches are compositionally biased toward low complexity: residues 277–319 (GSGP…AAPA) and 329–352 (PQSAASSQPQSASTPPALAPGSLL). 2 consecutive C2H2-type zinc fingers follow at residues 420–442 (HKCRFCAKVFGSDSALQIHLRSH) and 448–470 (FKCNICGNRFSTKGNLKVHFQRH). Positions 523-633 (PTSVGLQLPP…VDGAPTSLGS (111 aa)) are disordered. Positions 543-561 (SPSATPASRSPQRPSPASS) are enriched in low complexity. Over residues 577 to 586 (VSATAESPQS) the composition is skewed to polar residues. 3 C2H2-type zinc fingers span residues 679–701 (NQCVICHRVLSCQSALKMHYRTH), 707–729 (FKCKICGRAFTTKGNLKTHFGVH), and 739–761 (HSCPICQKKFTNAVVLQQHIRMH). Residues 864-955 (SVENGSGESD…GSGGAPGRAG (92 aa)) form a disordered region. Positions 889 to 910 (RSAGSPALSESSSSQALSPAPS) are enriched in low complexity. Serine 919 carries the phosphoserine modification. C2H2-type zinc fingers lie at residues 977 to 999 (TVCGVCGKPFACKSALEIHYRSH), 1005 to 1027 (FVCALCRRGCSTMGNLKQHLLTH), 1113 to 1135 (HNCQSCGKTFSSASALQIHERTH), and 1141 to 1163 (FGCTICGRAFTTKGNLKVHMGTH). The residue at position 1177 (serine 1177) is a Phosphoserine. The interval 1259-1279 (GMDKARTGSSPPIVSLDKASS) is disordered.

Belongs to the sal C2H2-type zinc-finger protein family. Widely expressed in adult with highest levels in heart. Expressed in fetal brain (in neurons of hippocampus, cortex, mediodorsal and ventrolateral thalamic nuclei, putamen, cerebellum and brainstem).

The protein localises to the nucleus. Probable transcription factor. This is Sal-like protein 3 (SALL3) from Homo sapiens (Human).